Here is a 256-residue protein sequence, read N- to C-terminus: Biosynthetic peptidoglycan transglycosylase (256 aa).

The helical transmembrane segment at 26–48 threads the bilayer; it reads VARWLAYAGGVFAGAWLATQLYY.

Belongs to the glycosyltransferase 51 family.

It is found in the cell inner membrane. It carries out the reaction [GlcNAc-(1-&gt;4)-Mur2Ac(oyl-L-Ala-gamma-D-Glu-L-Lys-D-Ala-D-Ala)](n)-di-trans,octa-cis-undecaprenyl diphosphate + beta-D-GlcNAc-(1-&gt;4)-Mur2Ac(oyl-L-Ala-gamma-D-Glu-L-Lys-D-Ala-D-Ala)-di-trans,octa-cis-undecaprenyl diphosphate = [GlcNAc-(1-&gt;4)-Mur2Ac(oyl-L-Ala-gamma-D-Glu-L-Lys-D-Ala-D-Ala)](n+1)-di-trans,octa-cis-undecaprenyl diphosphate + di-trans,octa-cis-undecaprenyl diphosphate + H(+). The protein operates within cell wall biogenesis; peptidoglycan biosynthesis. Peptidoglycan polymerase that catalyzes glycan chain elongation from lipid-linked precursors. The polypeptide is Biosynthetic peptidoglycan transglycosylase (Burkholderia thailandensis (strain ATCC 700388 / DSM 13276 / CCUG 48851 / CIP 106301 / E264)).